The primary structure comprises 88 residues: uncharacterized protein (88 aa).

A signal peptide spans 1–24; sequence MLPRSCKDFYETLRTAVLCGQACA.

This sequence to Rhizobium NGR234A y4oL.

This is an uncharacterized protein from Sinorhizobium fredii (strain NBRC 101917 / NGR234).